The sequence spans 281 residues: Lipoyl synthase (281 aa).

The [4Fe-4S] cluster site is built by C35, C40, C46, C61, C65, C68, and S274. Residues 47-263 (FGCGQATFLI…RDEALALGFR (217 aa)) form the Radical SAM core domain.

The protein belongs to the radical SAM superfamily. Lipoyl synthase family. It depends on [4Fe-4S] cluster as a cofactor.

It is found in the cytoplasm. The catalysed reaction is [[Fe-S] cluster scaffold protein carrying a second [4Fe-4S](2+) cluster] + N(6)-octanoyl-L-lysyl-[protein] + 2 oxidized [2Fe-2S]-[ferredoxin] + 2 S-adenosyl-L-methionine + 4 H(+) = [[Fe-S] cluster scaffold protein] + N(6)-[(R)-dihydrolipoyl]-L-lysyl-[protein] + 4 Fe(3+) + 2 hydrogen sulfide + 2 5'-deoxyadenosine + 2 L-methionine + 2 reduced [2Fe-2S]-[ferredoxin]. It functions in the pathway protein modification; protein lipoylation via endogenous pathway; protein N(6)-(lipoyl)lysine from octanoyl-[acyl-carrier-protein]: step 2/2. In terms of biological role, catalyzes the radical-mediated insertion of two sulfur atoms into the C-6 and C-8 positions of the octanoyl moiety bound to the lipoyl domains of lipoate-dependent enzymes, thereby converting the octanoylated domains into lipoylated derivatives. This is Lipoyl synthase from Trichlorobacter lovleyi (strain ATCC BAA-1151 / DSM 17278 / SZ) (Geobacter lovleyi).